The chain runs to 170 residues: Non-specific lipid transfer protein GPI-anchored 5 (170 aa).

The first 24 residues, 1 to 24 (MKMEMGLVFLTVFMAVMSSTMVSA), serve as a signal peptide directing secretion. Disulfide bonds link cysteine 28/cysteine 69, cysteine 38/cysteine 53, cysteine 54/cysteine 95, and cysteine 67/cysteine 105. N-linked (GlcNAc...) asparagine glycosylation is found at asparagine 45, asparagine 84, asparagine 124, and asparagine 130. Residues 105–148 (CNTGGGGGGSTSDSPAESPNSSGPGNGSKTVPVGEGDGPPSSDG) are disordered. The GPI-anchor amidated serine moiety is linked to residue serine 146. The propeptide at 147-170 (DGSSIKFSFPLIAFFSAVSYMAIF) is removed in mature form.

Belongs to the plant LTP family. As to expression, expressed in seedlings, preferentially in the endodermis of hypocotyls and roots, as well as in anthers, sepals and flower tori.

It is found in the cell membrane. Lipid transfer protein involved in seed and ovule maturation and development, probably by regulating the fatty acids homeostasis during suberin and sporopollenin biosynthesis or deposition. Contributes to pre-invasive defense against some non-host powdery mildew pathogens by preventing the penetration of the epidermal cell wall by the fungal agents (e.g. Blumeria graminis f. sp. hordei (Bgh)). This is Non-specific lipid transfer protein GPI-anchored 5 from Arabidopsis thaliana (Mouse-ear cress).